Reading from the N-terminus, the 142-residue chain is Transcription antitermination protein NusB (142 aa).

It belongs to the NusB family.

Functionally, involved in transcription antitermination. Required for transcription of ribosomal RNA (rRNA) genes. Binds specifically to the boxA antiterminator sequence of the ribosomal RNA (rrn) operons. The sequence is that of Transcription antitermination protein NusB from Roseiflexus sp. (strain RS-1).